Here is a 136-residue protein sequence, read N- to C-terminus: Heavy metal-associated isoprenylated plant protein 19 (136 aa).

The HMA domain maps to 13 to 77 (YMDVEFNVSM…LKKKTGKRVK (65 aa)). Residues C24 and C27 each contribute to the a metal cation site. C133 is subject to Cysteine methyl ester. Residue C133 is the site of S-farnesyl cysteine attachment. A propeptide spans 134–136 (SIS) (removed in mature form).

This sequence belongs to the HIPP family.

Heavy-metal-binding protein. The polypeptide is Heavy metal-associated isoprenylated plant protein 19 (Arabidopsis thaliana (Mouse-ear cress)).